A 152-amino-acid chain; its full sequence is MAATEDTLYALIDPLLTGMGYELVGIEYGGPAGKRLLRIYIDSPDGITLDDCETCSRQISAVLDVEDPIPGEYTLEISSPGLDRPIFKASDYDRFAGEQIKIRLSAPWEGRRRFKGVLAGLGDEGVRVVEAQGDEVQIPLDLIEKARLILEP.

This sequence belongs to the RimP family.

The protein resides in the cytoplasm. In terms of biological role, required for maturation of 30S ribosomal subunits. The polypeptide is Ribosome maturation factor RimP (Alkalilimnicola ehrlichii (strain ATCC BAA-1101 / DSM 17681 / MLHE-1)).